The sequence spans 105 residues: MAKKMQRRRRQKRTRSQRGELPFSLVDRFLREEFHSSRLSSSALSFLTSVLEYLTSNILELAGEVAQTTGRKRIAPEDVRLVVQNNEQLRQLFKPGGTSVNEDDN.

It belongs to the histone H2A family. The nucleosome is a histone octamer containing two molecules each of H2A, H2B, H3 and H4 assembled in one H3-H4 heterotetramer and two H2A-H2B heterodimers. May be incorporated into a proportion of nucleosomes, replacing one or more H2A molecules. Interacts with H2BC1/TH2B; preferentially dimerizes with H2BC1/TH2B to form nucleosomes. Testis-specific.

The protein resides in the nucleus. Its subcellular location is the chromosome. Its function is as follows. Atypical histone H2A which can replace conventional H2A in some nucleosomes and may play a role during spermatogenesis. Nucleosomes wrap and compact DNA into chromatin, limiting DNA accessibility to the cellular machineries which require DNA as a template. Histones thereby play a central role in transcription regulation, DNA repair, DNA replication and chromosomal stability. DNA accessibility is regulated via a complex set of post-translational modifications of histones, also called histone code, and nucleosome remodeling. The chain is Histone H2A-like 1 from Mus musculus (Mouse).